Reading from the N-terminus, the 938-residue chain is Isoleucine--tRNA ligase (938 aa).

The short motif at 58 to 68 is the 'HIGH' region element; the sequence is PYANGSIHIGH. At Lys-183 the chain carries N6-acetyllysine. Glu-561 provides a ligand contact to L-isoleucyl-5'-AMP. The short motif at 602-606 is the 'KMSKS' region element; sequence KMSKS. Lys-605 provides a ligand contact to ATP. Residues Cys-901, Cys-904, Cys-921, and Cys-924 each contribute to the Zn(2+) site.

The protein belongs to the class-I aminoacyl-tRNA synthetase family. IleS type 1 subfamily. In terms of assembly, monomer. It depends on Zn(2+) as a cofactor.

The protein resides in the cytoplasm. It carries out the reaction tRNA(Ile) + L-isoleucine + ATP = L-isoleucyl-tRNA(Ile) + AMP + diphosphate. Functionally, catalyzes the attachment of isoleucine to tRNA(Ile). As IleRS can inadvertently accommodate and process structurally similar amino acids such as valine, to avoid such errors it has two additional distinct tRNA(Ile)-dependent editing activities. One activity is designated as 'pretransfer' editing and involves the hydrolysis of activated Val-AMP. The other activity is designated 'posttransfer' editing and involves deacylation of mischarged Val-tRNA(Ile). The chain is Isoleucine--tRNA ligase from Shigella flexneri.